Here is a 583-residue protein sequence, read N- to C-terminus: Transmembrane protein 108 (583 aa).

Residues 7–27 (ALYCQLLSFLLTLALTEALVF) form a helical membrane-spanning segment. Residues 31-176 (EPSPRESLQV…ATIRRPPRPP (146 aa)) form an interacts with SH3GL2 region. Disordered regions lie at residues 71–360 (VTPT…GVFA) and 376–404 (VPSEGLPQGTSLAPQAPAHPTWASESTVS). 2 stretches are compositionally biased toward polar residues: residues 80 to 93 (PSSQATAPMATTTP) and 100 to 122 (PTNTISTIMATASTPHSEGSLST). Positions 177 to 187 (GSSRKGAGSSP) are enriched in low complexity. Positions 180-413 (RKGAGSSPRP…SQAEEKAVAT (234 aa)) are interacts with DST (isoform 1). Polar residues-rich tracts occupy residues 251-273 (YSSSPQPQTVAATSAPSRTSWVP), 310-319 (ASGTPASQQR), and 333-357 (DGSSHSDSWLTVTPGTSRPPSTNSG). A helical membrane pass occupies residues 477 to 497 (IAWVILAISVPISSCSVLLTV). Positions 498 to 583 (CCLRRKKKPA…FVGNDQVSEI (86 aa)) are interaction with CYFIP2.

In terms of assembly, interacts with DST (isoform 1). Interacts with SH3GL2. Interacts (via N-terminus) with CYFIP1 and CYFIP2; the interactions associate TMEM108 with the WAVE1 complex. Glycosylated.

Its subcellular location is the membrane. It is found in the postsynaptic density. It localises to the endosome membrane. The protein localises to the cell projection. The protein resides in the axon. Its subcellular location is the dendrite. It is found in the early endosome. In terms of biological role, transmembrane protein required for proper cognitive functions. Involved in the development of dentate gyrus (DG) neuron circuitry, is necessary for AMPA receptors surface expression and proper excitatory postsynaptic currents of DG granule neurons. Regulates the organization and stability of the microtubule network of sensory neurons to allow axonal transport. Through the interaction with DST, mediates the docking of the dynein/dynactin motor complex to vesicle cargos for retrograde axonal transport. In hippocampal neurons, required for BDNF-dependent dendrite outgrowth. Cooperates with SH3GL2 and recruits the WAVE1 complex to facilitate actin-dependent BDNF:NTRK2 early endocytic trafficking and mediate signaling from early endosomes. The polypeptide is Transmembrane protein 108 (Bos taurus (Bovine)).